The sequence spans 158 residues: Small ribosomal subunit protein uS9 (158 aa).

Belongs to the universal ribosomal protein uS9 family.

This chain is Small ribosomal subunit protein uS9, found in Brucella abortus (strain S19).